The following is a 234-amino-acid chain: Filarial antigen Av33 (234 aa).

The first 17 residues, 1–17 (MKILSCLLLCTITVLEG), serve as a signal peptide directing secretion. C135 and C230 are joined by a disulfide. Residues 204 to 234 (TSQASEATTIPTTTQTPVEAPETPSFCVPIY) form a disordered region. Positions 211–220 (TTIPTTTQTP) are enriched in low complexity.

It belongs to the protease inhibitor I33 family.

Its subcellular location is the secreted. Aspartyl protease inhibitor. The sequence is that of Filarial antigen Av33 from Acanthocheilonema viteae (Filarial nematode worm).